Here is a 705-residue protein sequence, read N- to C-terminus: Elongation factor G (705 aa).

The tr-type G domain occupies 8 to 289 (VNYRNIGISA…TVINYLPSPK (282 aa)). Residues 17–24 (AHIDAGKT), 88–92 (DTPGH), and 142–145 (NKMD) each bind GTP.

Belongs to the TRAFAC class translation factor GTPase superfamily. Classic translation factor GTPase family. EF-G/EF-2 subfamily.

The protein localises to the cytoplasm. In terms of biological role, catalyzes the GTP-dependent ribosomal translocation step during translation elongation. During this step, the ribosome changes from the pre-translocational (PRE) to the post-translocational (POST) state as the newly formed A-site-bound peptidyl-tRNA and P-site-bound deacylated tRNA move to the P and E sites, respectively. Catalyzes the coordinated movement of the two tRNA molecules, the mRNA and conformational changes in the ribosome. The sequence is that of Elongation factor G from Wigglesworthia glossinidia brevipalpis.